The following is a 314-amino-acid chain: GATA zinc finger domain-containing protein 19 (314 aa).

The polypeptide is GATA zinc finger domain-containing protein 19 (gtaS) (Dictyostelium discoideum (Social amoeba)).